We begin with the raw amino-acid sequence, 1023 residues long: 2-oxoglutarate dehydrogenase complex component E1 (1023 aa).

Residues M1–Y40 constitute a mitochondrion transit peptide. N6-succinyllysine is present on K74. S100 is subject to Phosphoserine. Positions 143, 156, and 158 each coordinate Ca(2+). R312 contributes to the thiamine diphosphate binding site. Position 401 is an N6-acetyllysine (K401). D411, N444, and I446 together coordinate thiamine diphosphate. D411, N444, and I446 together coordinate Mg(2+). Residue K534 forms a Glycyl lysine isopeptide (Lys-Gly) (interchain with G-Cter in ubiquitin) linkage. An N6-succinyllysine modification is found at K564. Position 676 (Q676) interacts with thiamine diphosphate. At K970 the chain carries N6-acetyllysine.

It belongs to the alpha-ketoglutarate dehydrogenase family. Homodimer. The 2-oxoglutarate dehydrogenase complex is composed of OGDH (2-oxoglutarate dehydrogenase; E1), DLST (dihydrolipoamide succinyltransferase; E2), DLD (dihydrolipoamide dehydrogenase; E3), and the assembly factor KGD4. It contains multiple copies of the three enzymatic components (E1, E2 and E3). In the nucleus, the 2-oxoglutarate dehydrogenase complex associates with KAT2A. Interacts with ABHD11; this interaction maintains the functional lipoylation of the 2-oxoglutarate dehydrogenase complex. Thiamine diphosphate is required as a cofactor. It depends on Mg(2+) as a cofactor.

The protein localises to the mitochondrion. It is found in the nucleus. The catalysed reaction is N(6)-[(R)-lipoyl]-L-lysyl-[protein] + 2-oxoglutarate + H(+) = N(6)-[(R)-S(8)-succinyldihydrolipoyl]-L-lysyl-[protein] + CO2. Calcium ions and ADP stimulate, whereas ATP and NADH reduce catalytic activity. 2-oxoglutarate dehydrogenase (E1o) component of the 2-oxoglutarate dehydrogenase complex (OGDHC). Participates in the first step, rate limiting for the overall conversion of 2-oxoglutarate to succinyl-CoA and CO(2) catalyzed by the whole OGDHC. Catalyzes the irreversible decarboxylation of 2-oxoglutarate (alpha-ketoglutarate) via the thiamine diphosphate (ThDP) cofactor and subsequent transfer of the decarboxylated acyl intermediate on an oxidized dihydrolipoyl group that is covalently amidated to the E2 enzyme (dihydrolipoyllysine-residue succinyltransferase or DLST). Plays a key role in the Krebs (citric acid) cycle, which is a common pathway for oxidation of fuel molecules, including carbohydrates, fatty acids, and amino acids. Can catalyze the decarboxylation of 2-oxoadipate in vitro, but at a much lower rate than 2-oxoglutarate. Mainly active in the mitochondrion. A fraction of the 2-oxoglutarate dehydrogenase complex also localizes in the nucleus and is required for lysine succinylation of histones: associates with KAT2A on chromatin and provides succinyl-CoA to histone succinyltransferase KAT2A. The sequence is that of 2-oxoglutarate dehydrogenase complex component E1 from Homo sapiens (Human).